A 488-amino-acid polypeptide reads, in one-letter code: Calcium uniporter protein, mitochondrial (488 aa).

The transit peptide at 1–74 directs the protein to the mitochondrion; it reads MRALVSRTPI…RSFQLSASSR (74 aa). A disordered region spans residues 65-117; it reads RSFQLSASSRDKRGPQSAEPDPLERLEVKKVQQQHENEKDDSGRDTKSGGKVA. Over 75-339 the chain is Mitochondrial matrix; sequence DKRGPQSAEP…ECDALAHRGA (265 aa). Over residues 86–112 the composition is skewed to basic and acidic residues; the sequence is PLERLEVKKVQQQHENEKDDSGRDTKS. Residues 340-361 traverse the membrane as a helical segment; sequence QRVALGGFGILAFWWYIVYKLT. Residues 362-370 are Mitochondrial intermembrane-facing; the sequence is FETDLGWDT. Positions 368 to 376 match the Selectivity filter motif; it reads WDTMEPVTY. A helical membrane pass occupies residues 371–391; the sequence is MEPVTYLVSLSTLMGGYLWFL. E372 provides a ligand contact to Ca(2+). Over 392–488 the chain is Mitochondrial matrix; that stretch reads YHNREISYRS…ERPKDDRDDD (97 aa). The tract at residues 464–488 is disordered; that stretch reads ALKKERRLKNGSQKEERPKDDRDDD. Basic and acidic residues predominate over residues 475-488; the sequence is SQKEERPKDDRDDD.

The protein belongs to the MCU (TC 1.A.77) family. Homotetramer, assembles in a dimer or dimers configuration with two interfaces.

It localises to the mitochondrion inner membrane. The catalysed reaction is Ca(2+)(in) = Ca(2+)(out). With respect to regulation, inhibited by ruthenium red or its derivative Ru360. Functionally, highly selective calcium channel localized to the inner mitochondrial membrane, which mediates calcium uptake into the mitochondrial matrix. Mitochondrial calcium homeostasis plays key roles in cellular physiology and regulates ATP production, cytoplasmic calcium signals and activation of cell death pathways. Sufficient to operate as a pore-forming channel without the need of calcium-sensor or auxiliary subunit. The sequence is that of Calcium uniporter protein, mitochondrial from Neosartorya fischeri (strain ATCC 1020 / DSM 3700 / CBS 544.65 / FGSC A1164 / JCM 1740 / NRRL 181 / WB 181) (Aspergillus fischerianus).